The following is a 79-amino-acid chain: Acyl carrier protein (79 aa).

The 76-residue stretch at 2–77 folds into the Carrier domain; that stretch reads SDIEQRVKKI…QAIDYAKAHV (76 aa). Ser37 is modified (O-(pantetheine 4'-phosphoryl)serine).

It belongs to the acyl carrier protein (ACP) family. 4'-phosphopantetheine is transferred from CoA to a specific serine of apo-ACP by AcpS. This modification is essential for activity because fatty acids are bound in thioester linkage to the sulfhydryl of the prosthetic group.

The protein resides in the cytoplasm. It participates in lipid metabolism; fatty acid biosynthesis. Carrier of the growing fatty acid chain in fatty acid biosynthesis. The chain is Acyl carrier protein from Janthinobacterium sp. (strain Marseille) (Minibacterium massiliensis).